Consider the following 184-residue polypeptide: Peptide deformylase (184 aa).

Fe cation is bound by residues C111 and H154. The active site involves E155. A Fe cation-binding site is contributed by H158.

This sequence belongs to the polypeptide deformylase family. Fe(2+) is required as a cofactor.

The catalysed reaction is N-terminal N-formyl-L-methionyl-[peptide] + H2O = N-terminal L-methionyl-[peptide] + formate. Removes the formyl group from the N-terminal Met of newly synthesized proteins. Requires at least a dipeptide for an efficient rate of reaction. N-terminal L-methionine is a prerequisite for activity but the enzyme has broad specificity at other positions. The polypeptide is Peptide deformylase (Lactobacillus helveticus (strain DPC 4571)).